A 668-amino-acid polypeptide reads, in one-letter code: Protein-glutamine gamma-glutamyltransferase (668 aa).

Over 1–6 (MNAIPR) the chain is Cytoplasmic. The chain crosses the membrane as a helical span at residues 7–27 (VALVWLLVAQVLVILPHLAYM). Residues 28–50 (PLWIAAMWLGCAAWRVQVFRMRA) are Periplasmic-facing. Residues 51 to 71 (GYPRAWVKLALALLAGAGVWL) traverse the membrane as a helical segment. Residues 72–74 (SRG) are Cytoplasmic-facing. The chain crosses the membrane as a helical span at residues 75 to 95 (SLVGLDAGAVLLIAAFILKLV). Over 96-103 (EMKTRRDA) the chain is Periplasmic. 2 helical membrane-spanning segments follow: residues 104–124 (LVLV…DDGF) and 125–145 (LAAL…IGLQ). Topologically, residues 146 to 158 (QSAFASRPWPTLR) are cytoplasmic. Residues 159 to 179 (LAGGLLLQALPLMLLLFLFFP) traverse the membrane as a helical segment. Over 180 to 548 (RLGPLWSLPM…FGGLDPTRLG (369 aa)) the chain is Periplasmic. Cysteine 404 acts as the Nucleophile in catalysis. Active-site residues include histidine 448 and aspartate 464. A helical membrane pass occupies residues 549–569 (LLLGAAAILSVGLLALFLLKP). The Cytoplasmic portion of the chain corresponds to 570-668 (WQGRGDLRSR…TRDGRGEEQA (99 aa)).

This sequence belongs to the transglutaminase-like superfamily.

Its subcellular location is the cell inner membrane. The enzyme catalyses L-glutaminyl-[protein] + L-lysyl-[protein] = [protein]-L-lysyl-N(6)-5-L-glutamyl-[protein] + NH4(+). Functionally, displays transglutaminase activity (TGase) in vitro. Plays a critical role in the viability of P.aeruginosa. Might contribute to an essential function linked to the cell wall. This chain is Protein-glutamine gamma-glutamyltransferase (tgpA), found in Pseudomonas aeruginosa (strain ATCC 15692 / DSM 22644 / CIP 104116 / JCM 14847 / LMG 12228 / 1C / PRS 101 / PAO1).